A 205-amino-acid chain; its full sequence is MGSSSGQSGYDLSFKILLIGDSGVGKSSLLLSFISSSVEDLAPTIGVDFKIKQMKVRGKRLKLTIWDTAGQEKFRTLTSSYFRGSQGIILVYDVTKRETFLNLADIWAKEIELYSTNHDCIKMLVGNKVDRESERKVSREEGMALAKDLNCLFHECSARTRENVNGCFEELALKIMEVPSLLEEGSSSVKRKPDYRAHQGRCCSS.

Glycine 20–serine 27 provides a ligand contact to GTP. The Effector region motif lies at leucine 41–phenylalanine 49. Residues aspartate 67–glutamine 71, asparagine 127–aspartate 130, and serine 157–alanine 158 each bind GTP. Residues cysteine 202 and cysteine 203 are each lipidated (S-geranylgeranyl cysteine).

The protein belongs to the small GTPase superfamily. Rab family.

It localises to the cell membrane. Intracellular vesicle trafficking and protein transport. The chain is Ras-related protein RABC2b (RABC2B) from Arabidopsis thaliana (Mouse-ear cress).